The sequence spans 403 residues: Prostaglandin D2 receptor 2 (403 aa).

The Extracellular segment spans residues 1-34 (MANITLKPLCPLLEEMVQLPNHSNSSLRYIDHVS). N-linked (GlcNAc...) asparagine glycans are attached at residues Asn-3, Asn-21, and Asn-24. A helical membrane pass occupies residues 35 to 55 (VLLHGLASLLGLVENGLILFV). The Cytoplasmic portion of the chain corresponds to 56-71 (VGCRMRQTVVTTWVLH). The helical transmembrane segment at 72-92 (LALSDLLAAASLPFFTYFLAV) threads the bilayer. Residues 93 to 104 (GHSWELGTTFCK) lie on the Extracellular side of the membrane. Residues Cys-103 and Cys-198 are joined by a disulfide bond. Residues 105-125 (LHSSVFFLNMFASGFLLSAIS) traverse the membrane as a helical segment. The Cytoplasmic portion of the chain corresponds to 126-147 (LDRCLQVVRPVWAQNHRTVAAA). The helical transmembrane segment at 148 to 168 (HRVCLMLWALAVLNTVPYFVF) threads the bilayer. Topologically, residues 169-209 (RDTIPRRDGRIMCYYNMLLLNPGSDRDTTCDYRQKALAVSK) are extracellular. The chain crosses the membrane as a helical span at residues 210–230 (FLLAFMVPLAIIASSHVAVSL). Residues 231-245 (QLHHRGRQRTGRFVR) lie on the Cytoplasmic side of the membrane. A helical transmembrane segment spans residues 246–266 (LVAAIVVAFILCWGPYHIFSL). The Extracellular portion of the chain corresponds to 267–284 (LEARAHSVTTLRQLASRG). The helical transmembrane segment at 285 to 305 (LPFVTSLAFFNSVVNPLLYVL) threads the bilayer. The Cytoplasmic portion of the chain corresponds to 306–403 (TCPDMLHKLR…KQGSLSCTLD (98 aa)). Positions 329–332 (DSDL) match the Involved in the recycling of CRTH2 motif. Ser-330 carries the phosphoserine modification. Disordered stretches follow at residues 332 to 353 (LSTG…STTT) and 384 to 403 (PRRV…CTLD). Over residues 338–348 (KRCRRRHRRRA) the composition is skewed to basic residues. The residue at position 349 (Ser-349) is a Phosphoserine. Polar residues predominate over residues 393-403 (EKQGSLSCTLD).

It belongs to the G-protein coupled receptor 1 family. Post-translationally, phosphorylated.

It localises to the cell membrane. Receptor for prostaglandin D2 (PGD2). Coupled to the G(i)-protein. Receptor activation may result in pertussis toxin-sensitive decreases in cAMP levels and Ca(2+) mobilization. PI3K signaling is also implicated in mediating PTGDR2 effects. PGD2 induced receptor internalization. CRTH2 internalization can be regulated by diverse kinases such as, PKC, PKA, GRK2, GPRK5/GRK5 and GRK6. Receptor activation is responsible, at least in part, in immune regulation and allergic/inflammation responses. The polypeptide is Prostaglandin D2 receptor 2 (Ptgdr2) (Rattus norvegicus (Rat)).